Consider the following 305-residue polypeptide: Homoserine O-succinyltransferase (305 aa).

The Acyl-thioester intermediate role is filled by cysteine 142. Substrate is bound by residues lysine 163 and serine 192. Residue histidine 235 is the Proton acceptor of the active site. Glutamate 237 is a catalytic residue. Arginine 249 serves as a coordination point for substrate.

Belongs to the MetA family.

It is found in the cytoplasm. The catalysed reaction is L-homoserine + succinyl-CoA = O-succinyl-L-homoserine + CoA. It functions in the pathway amino-acid biosynthesis; L-methionine biosynthesis via de novo pathway; O-succinyl-L-homoserine from L-homoserine: step 1/1. Its function is as follows. Transfers a succinyl group from succinyl-CoA to L-homoserine, forming succinyl-L-homoserine. This chain is Homoserine O-succinyltransferase, found in Psychromonas ingrahamii (strain DSM 17664 / CCUG 51855 / 37).